A 212-amino-acid chain; its full sequence is Thymidylate kinase (212 aa).

10–17 (GLEGAGKT) serves as a coordination point for ATP.

The protein belongs to the thymidylate kinase family.

The catalysed reaction is dTMP + ATP = dTDP + ADP. Its function is as follows. Phosphorylation of dTMP to form dTDP in both de novo and salvage pathways of dTTP synthesis. In Yersinia enterocolitica serotype O:8 / biotype 1B (strain NCTC 13174 / 8081), this protein is Thymidylate kinase.